The primary structure comprises 395 residues: Digeranylgeranylglycerophospholipid reductase (395 aa).

FAD is bound by residues alanine 15, aspartate 34, cysteine 45, alanine 46, alanine 48, arginine 97, alanine 121, aspartate 276, and glycine 288. Arginine 329 lines the a 2,3-bis-O-(geranylgeranyl)-sn-glycerol 1-phospholipid pocket.

This sequence belongs to the geranylgeranyl reductase family. DGGGPL reductase subfamily. FAD is required as a cofactor.

It catalyses the reaction a 2,3-bis-O-phytanyl-sn-glycerol 1-phospholipid + 8 A = a 2,3-bis-O-(geranylgeranyl)-sn-glycerol 1-phospholipid + 8 AH2. It carries out the reaction 2,3-bis-O-(phytanyl)-sn-glycerol 1-phosphate + 8 A = 2,3-bis-O-(geranylgeranyl)-sn-glycerol 1-phosphate + 8 AH2. The catalysed reaction is CDP-2,3-bis-O-(geranylgeranyl)-sn-glycerol + 8 AH2 = CDP-2,3-bis-O-(phytanyl)-sn-glycerol + 8 A. The enzyme catalyses archaetidylserine + 8 AH2 = 2,3-bis-O-phytanyl-sn-glycero-3-phospho-L-serine + 8 A. Its pathway is membrane lipid metabolism; glycerophospholipid metabolism. Its function is as follows. Is involved in the reduction of 2,3-digeranylgeranylglycerophospholipids (unsaturated archaeols) into 2,3-diphytanylglycerophospholipids (saturated archaeols) in the biosynthesis of archaeal membrane lipids. Catalyzes the formation of archaetidic acid (2,3-di-O-phytanyl-sn-glyceryl phosphate) from 2,3-di-O-geranylgeranylglyceryl phosphate (DGGGP) via the hydrogenation of each double bond of the isoprenoid chains. Is also probably able to reduce double bonds of geranyl groups in CDP-2,3-bis-O-(geranylgeranyl)-sn-glycerol and archaetidylserine, thus acting at various stages in the biosynthesis of archaeal membrane lipids. The protein is Digeranylgeranylglycerophospholipid reductase of Thermococcus kodakarensis (strain ATCC BAA-918 / JCM 12380 / KOD1) (Pyrococcus kodakaraensis (strain KOD1)).